A 368-amino-acid chain; its full sequence is Phospho-N-acetylmuramoyl-pentapeptide-transferase (368 aa).

Helical transmembrane passes span 31 to 51 (LTSM…LYGL), 73 to 93 (TMGG…WGNL), 98 to 118 (VILL…DDYM), 134 to 154 (FILS…YTGT), 175 to 195 (GPVI…IIGS), 213 to 233 (VLIS…PIVA), 249 to 269 (VFLS…AHPA), 271 to 291 (VFMG…IVIL), 296 to 316 (ILLL…ILQV), and 345 to 365 (KIVI…LSTL).

This sequence belongs to the glycosyltransferase 4 family. MraY subfamily. It depends on Mg(2+) as a cofactor.

The protein localises to the cell inner membrane. The catalysed reaction is UDP-N-acetyl-alpha-D-muramoyl-L-alanyl-gamma-D-glutamyl-meso-2,6-diaminopimeloyl-D-alanyl-D-alanine + di-trans,octa-cis-undecaprenyl phosphate = di-trans,octa-cis-undecaprenyl diphospho-N-acetyl-alpha-D-muramoyl-L-alanyl-D-glutamyl-meso-2,6-diaminopimeloyl-D-alanyl-D-alanine + UMP. The protein operates within cell wall biogenesis; peptidoglycan biosynthesis. Functionally, catalyzes the initial step of the lipid cycle reactions in the biosynthesis of the cell wall peptidoglycan: transfers peptidoglycan precursor phospho-MurNAc-pentapeptide from UDP-MurNAc-pentapeptide onto the lipid carrier undecaprenyl phosphate, yielding undecaprenyl-pyrophosphoryl-MurNAc-pentapeptide, known as lipid I. In Leptospira interrogans serogroup Icterohaemorrhagiae serovar copenhageni (strain Fiocruz L1-130), this protein is Phospho-N-acetylmuramoyl-pentapeptide-transferase.